A 102-amino-acid polypeptide reads, in one-letter code: Co-chaperonin GroES (102 aa).

This sequence belongs to the GroES chaperonin family. As to quaternary structure, heptamer of 7 subunits arranged in a ring. Interacts with the chaperonin GroEL.

It is found in the cytoplasm. Together with the chaperonin GroEL, plays an essential role in assisting protein folding. The GroEL-GroES system forms a nano-cage that allows encapsulation of the non-native substrate proteins and provides a physical environment optimized to promote and accelerate protein folding. GroES binds to the apical surface of the GroEL ring, thereby capping the opening of the GroEL channel. This is Co-chaperonin GroES from Streptomyces coelicolor (strain ATCC BAA-471 / A3(2) / M145).